We begin with the raw amino-acid sequence, 319 residues long: Acetyl esterase (319 aa).

Positions His91–Gly93 match the Involved in the stabilization of the negatively charged intermediate by the formation of the oxyanion hole motif. Active-site residues include Ser165, Asp262, and His292.

The protein belongs to the 'GDXG' lipolytic enzyme family. In terms of assembly, homodimer. Interacts with MalT and MelA.

Its subcellular location is the cytoplasm. Functionally, displays esterase activity towards short chain fatty esters (acyl chain length of up to 8 carbons). Able to hydrolyze triacetylglycerol (triacetin) and tributyrylglycerol (tributyrin), but not trioleylglycerol (triolein) or cholesterol oleate. Negatively regulates MalT activity by antagonizing maltotriose binding. Inhibits MelA galactosidase activity. This chain is Acetyl esterase, found in Escherichia coli (strain 55989 / EAEC).